Reading from the N-terminus, the 156-residue chain is S-ribosylhomocysteine lyase (156 aa).

3 residues coordinate Fe cation: His56, His60, and Cys123.

Belongs to the LuxS family. As to quaternary structure, homodimer. Fe cation is required as a cofactor.

It carries out the reaction S-(5-deoxy-D-ribos-5-yl)-L-homocysteine = (S)-4,5-dihydroxypentane-2,3-dione + L-homocysteine. Involved in the synthesis of autoinducer 2 (AI-2) which is secreted by bacteria and is used to communicate both the cell density and the metabolic potential of the environment. The regulation of gene expression in response to changes in cell density is called quorum sensing. Catalyzes the transformation of S-ribosylhomocysteine (RHC) to homocysteine (HC) and 4,5-dihydroxy-2,3-pentadione (DPD). This is S-ribosylhomocysteine lyase from Staphylococcus saprophyticus subsp. saprophyticus (strain ATCC 15305 / DSM 20229 / NCIMB 8711 / NCTC 7292 / S-41).